A 346-amino-acid chain; its full sequence is N-acetyl-gamma-glutamyl-phosphate reductase (346 aa).

Cys149 is an active-site residue.

This sequence belongs to the NAGSA dehydrogenase family. Type 1 subfamily.

The protein localises to the cytoplasm. The enzyme catalyses N-acetyl-L-glutamate 5-semialdehyde + phosphate + NADP(+) = N-acetyl-L-glutamyl 5-phosphate + NADPH + H(+). Its pathway is amino-acid biosynthesis; L-arginine biosynthesis; N(2)-acetyl-L-ornithine from L-glutamate: step 3/4. Catalyzes the NADPH-dependent reduction of N-acetyl-5-glutamyl phosphate to yield N-acetyl-L-glutamate 5-semialdehyde. This Citrifermentans bemidjiense (strain ATCC BAA-1014 / DSM 16622 / JCM 12645 / Bem) (Geobacter bemidjiensis) protein is N-acetyl-gamma-glutamyl-phosphate reductase.